We begin with the raw amino-acid sequence, 34 residues long: Non-toxic venom protein (34 aa).

An LCN-type CS-alpha/beta domain is found at 1-34 (KEGYPTNSEGCKITXLFNDPYCKGXCINLSTQAD).

As to expression, expressed by the venom gland.

The protein resides in the secreted. In terms of biological role, does not cause symptoms of intoxication, paralysis or death in insects (A.domestica). This is Non-toxic venom protein from Rhopalurus junceus (Caribbean blue scorpion).